The sequence spans 347 residues: MLSNSEIKPSENSQKTKVLLTKANNASNERAPPPLSHFIAGGVAGMLGAIATAPLDVVKTRLQSDFYKDRFLKQTAKSKSPLTAAYRHFMDTCIILKNVKVHEGTRALFRGLGPNLIGTIPARSINFFSYGNGKRILADLFNNGQENSQIHLMAAAIAGVITSAATNPIWLVKTRLQLDKKSGQAAQYRSSIDCIIKTIRLEGFRGLYKGLSASLLGVGESTLQWVLYEKFKHAVAIRQLRRKELGIQETIYDKVLDWGGKLGGAGIAKFMAAGIAYPHEVVRTRLRQSPSINGTPKYTGLIQCFKLVWMEQGIVGLYGGLTAHLLRVVPNACILFGSYEVIMHFIG.

Solcar repeat units lie at residues 32–136 (PPPL…GKRI), 146–234 (ENSQ…FKHA), and 256–345 (LDWG…IMHF). 6 helical membrane-spanning segments follow: residues 38–58 (FIAGGVAGMLGAIATAPLDVV), 105–125 (TRALFRGLGPNLIGTIPARSI), 152–172 (LMAAAIAGVITSAATNPIWLV), 214–233 (SLLGVGESTLQWVLYEKFKH), 262–282 (LGGAGIAKFMAAGIAYPHEVV), and 317–338 (LYGGLTAHLLRVVPNACILFGS).

It localises to the mitochondrion inner membrane. It catalyses the reaction 5-methyl-UTP(out) + UTP(in) = 5-methyl-UTP(in) + UTP(out). Its function is as follows. Mitochondrial transporter that imports/exports pyrimidine nucleotides into and from mitochondria. Selectively transports uridine, thymidine, and cytosine (deoxy)nucleoside di- and triphosphates by an antiport mechanism. Also transports, with lower efficiency, uridine, thymidine, and cytosine (deoxy)nucleoside monophosphates as well as guanosine (deoxy)nucleoside di- and triphosphate. May import (deoxy)nucleoside triphosphates in exchange for intramitochondrial (deoxy)nucleoside monophosphates, thus providing precursors necessary for de novo synthesis of mitochondrial DNA and RNA while exporting products of their catabolism. Mediates the transport of iron and other divalent metal ions like copper and zinc across the mitochondrial inner membrane in a pyrimidine nucleotide-dependent fashion. Catalyzes the co-import of pyrimidine nucleotides and divalent metal ions including ferrous iron. Participates in mitochondrial genome maintenance, regulation of mitochondrial membrane potential and mitochondrial respiration. The protein is Mitochondrial carrier protein rim2 (rim2) of Schizosaccharomyces pombe (strain 972 / ATCC 24843) (Fission yeast).